The chain runs to 563 residues: UvrABC system protein C (563 aa).

Positions 12 to 87 constitute a GIY-YIG domain; it reads NKSGVYIFKK…IYKYKPKYNA (76 aa). In terms of domain architecture, UVR spans 194–229; sequence SNVISFIKLKMEQHARLLDFENAAKYRDILLNFNKV.

The protein belongs to the UvrC family. As to quaternary structure, interacts with UvrB in an incision complex.

Its subcellular location is the cytoplasm. The UvrABC repair system catalyzes the recognition and processing of DNA lesions. UvrC both incises the 5' and 3' sides of the lesion. The N-terminal half is responsible for the 3' incision and the C-terminal half is responsible for the 5' incision. This Fervidobacterium nodosum (strain ATCC 35602 / DSM 5306 / Rt17-B1) protein is UvrABC system protein C.